A 294-amino-acid polypeptide reads, in one-letter code: MPRGDSEQVRYCARFSYLWLKFSLIIYSTVFWLIGGLVLSVGIYAEAERQKYKTLESAFLAPAIILILLGVVMFIVSFIGVLASLRDNLCLLQSFMYILGICLVMELIGGIVALIFRNQTIDFLNDNIRRGIENYYDDLDFKNIMDFVQKKFKCCGGEDYRDWSKNQYHDCSAPGPLACGVPYTCCIRNTTDVVNTMCGYKTIDKERLNAQNIIHVRGCTNAVLIWFMDNYTIMAGLLLGILLPQFLGVLLTLLYITRVEDIILEHSVTDGLLGPGAKSRTDTAGTGCCLCYPD.

Residues 1–23 (MPRGDSEQVRYCARFSYLWLKFS) are Cytoplasmic-facing. The chain crosses the membrane as a helical span at residues 24–44 (LIIYSTVFWLIGGLVLSVGIY). Residues 45-62 (AEAERQKYKTLESAFLAP) are Extracellular-facing. The chain crosses the membrane as a helical span at residues 63 to 83 (AIILILLGVVMFIVSFIGVLA). Over 84–94 (SLRDNLCLLQS) the chain is Cytoplasmic. A helical membrane pass occupies residues 95 to 115 (FMYILGICLVMELIGGIVALI). Residues 116–235 (FRNQTIDFLN…WFMDNYTIMA (120 aa)) lie on the Extracellular side of the membrane. N118 carries an N-linked (GlcNAc...) asparagine glycan. 4 cysteine pairs are disulfide-bonded: C154-C219, C155-C185, C171-C179, and C186-C198. N189 and N230 each carry an N-linked (GlcNAc...) asparagine glycan. The helical transmembrane segment at 236 to 256 (GLLLGILLPQFLGVLLTLLYI) threads the bilayer. The Cytoplasmic portion of the chain corresponds to 257 to 294 (TRVEDIILEHSVTDGLLGPGAKSRTDTAGTGCCLCYPD).

This sequence belongs to the tetraspanin (TM4SF) family. As to quaternary structure, interacts with ADAM10; the interaction influences ADAM10 substrate specificity, endocytosis and turnover. Post-translationally, palmitoylated.

Its subcellular location is the cell membrane. The protein resides in the late endosome membrane. Part of TspanC8 subgroup, composed of 6 members that interact with the transmembrane metalloprotease ADAM10. This interaction is required for ADAM10 exit from the endoplasmic reticulum and for enzymatic maturation and trafficking to the cell surface as well as substrate specificity. Different TspanC8/ADAM10 complexes have distinct substrates. Promotes ADAM10-mediated cleavage of CDH2. Negatively regulates ligand-induced Notch activity probably by regulating ADAM10 activity. This Mus musculus (Mouse) protein is Tetraspanin-15 (Tspan15).